A 1088-amino-acid chain; its full sequence is Receptor-type guanylate cyclase gcy-17 (1088 aa).

An N-terminal signal peptide occupies residues methionine 1–alanine 20. Residues arginine 21–valine 480 are Extracellular-facing. Asparagine 33, asparagine 235, asparagine 251, asparagine 321, asparagine 381, asparagine 419, and asparagine 434 each carry an N-linked (GlcNAc...) asparagine glycan. The helical transmembrane segment at isoleucine 481–phenylalanine 501 threads the bilayer. Over tyrosine 502–isoleucine 1088 the chain is Cytoplasmic. The tract at residues serine 529–threonine 552 is disordered. The segment covering glutamate 535–threonine 552 has biased composition (polar residues). In terms of domain architecture, Protein kinase spans glutamate 535–asparagine 824. Residues leucine 826–leucine 854 are a coiled coil. Residues threonine 882 to glutamate 1012 form the Guanylate cyclase domain. Positions serine 1069 to isoleucine 1088 are disordered.

It belongs to the adenylyl cyclase class-4/guanylyl cyclase family. In terms of tissue distribution, expressed in PHA sensory neurons.

Its subcellular location is the cell membrane. The catalysed reaction is GTP = 3',5'-cyclic GMP + diphosphate. In terms of biological role, guanylate cyclase involved in the production of the second messenger cGMP. The polypeptide is Receptor-type guanylate cyclase gcy-17 (Caenorhabditis elegans).